A 322-amino-acid polypeptide reads, in one-letter code: Arginase (322 aa).

Residues His113, Asp141, His143, and Asp145 each coordinate Mn(2+). Substrate contacts are provided by residues 143 to 147 (HADIN), 154 to 156 (SGN), and Asp200. Mn(2+)-binding residues include Asp247 and Asp249. Substrate-binding residues include Thr261 and Glu292.

This sequence belongs to the arginase family. In terms of assembly, homotrimer. It depends on Mn(2+) as a cofactor.

It carries out the reaction L-arginine + H2O = urea + L-ornithine. The protein operates within nitrogen metabolism; urea cycle; L-ornithine and urea from L-arginine: step 1/1. The protein is Arginase (ARG) of Coccidioides posadasii (strain C735) (Valley fever fungus).